Reading from the N-terminus, the 329-residue chain is Probable cell division protein WhiA (329 aa).

The segment at residues 275-308 is a DNA-binding region (H-T-H motif); sequence SLEELGALADPPLTKDAVAGRIRRLLAMADKRAQ.

The protein belongs to the WhiA family.

Its function is as follows. Involved in cell division and chromosome segregation. In Streptomyces griseus subsp. griseus (strain JCM 4626 / CBS 651.72 / NBRC 13350 / KCC S-0626 / ISP 5235), this protein is Probable cell division protein WhiA.